The primary structure comprises 289 residues: Energy-coupling factor transporter ATP-binding protein EcfA2 (289 aa).

Residues isoleucine 7–aspartate 251 form the ABC transporter domain. An ATP-binding site is contributed by glycine 44–serine 51.

It belongs to the ABC transporter superfamily. Energy-coupling factor EcfA family. Forms a stable energy-coupling factor (ECF) transporter complex composed of 2 membrane-embedded substrate-binding proteins (S component), 2 ATP-binding proteins (A component) and 2 transmembrane proteins (T component).

It is found in the cell membrane. Its function is as follows. ATP-binding (A) component of a common energy-coupling factor (ECF) ABC-transporter complex. Unlike classic ABC transporters this ECF transporter provides the energy necessary to transport a number of different substrates. This is Energy-coupling factor transporter ATP-binding protein EcfA2 from Mycoplasma capricolum subsp. capricolum (strain California kid / ATCC 27343 / NCTC 10154).